The following is a 391-amino-acid chain: Phosphoglycerate kinase (391 aa).

Substrate contacts are provided by residues 21 to 23, R36, 59 to 62, R113, and R146; these read DLN and HLGR. ATP is bound by residues K197, E319, and 345-348; that span reads GGDT.

It belongs to the phosphoglycerate kinase family. As to quaternary structure, monomer.

The protein resides in the cytoplasm. It catalyses the reaction (2R)-3-phosphoglycerate + ATP = (2R)-3-phospho-glyceroyl phosphate + ADP. The protein operates within carbohydrate degradation; glycolysis; pyruvate from D-glyceraldehyde 3-phosphate: step 2/5. This is Phosphoglycerate kinase from Xanthomonas campestris pv. campestris (strain 8004).